A 154-amino-acid chain; its full sequence is 6,7-dimethyl-8-ribityllumazine synthase (154 aa).

Residues 22-23, 56-58, and 80-82 contribute to the 5-amino-6-(D-ribitylamino)uracil site; these read FN, SWE, and VLI. Residue 85 to 86 coordinates (2S)-2-hydroxy-3-oxobutyl phosphate; the sequence is AT. The Proton donor role is filled by His-88. 5-amino-6-(D-ribitylamino)uracil is bound at residue Phe-113. Arg-127 lines the (2S)-2-hydroxy-3-oxobutyl phosphate pocket. Residue Lys-135 coordinates 5-amino-6-(D-ribitylamino)uracil.

This sequence belongs to the DMRL synthase family. Forms an icosahedral capsid composed of 60 subunits, arranged as a dodecamer of pentamers.

It carries out the reaction (2S)-2-hydroxy-3-oxobutyl phosphate + 5-amino-6-(D-ribitylamino)uracil = 6,7-dimethyl-8-(1-D-ribityl)lumazine + phosphate + 2 H2O + H(+). It functions in the pathway cofactor biosynthesis; riboflavin biosynthesis; riboflavin from 2-hydroxy-3-oxobutyl phosphate and 5-amino-6-(D-ribitylamino)uracil: step 1/2. Catalyzes the formation of 6,7-dimethyl-8-ribityllumazine by condensation of 5-amino-6-(D-ribitylamino)uracil with 3,4-dihydroxy-2-butanone 4-phosphate. This is the penultimate step in the biosynthesis of riboflavin. This is 6,7-dimethyl-8-ribityllumazine synthase (ribH) from Aquifex aeolicus (strain VF5).